Here is a 711-residue protein sequence, read N- to C-terminus: Polyribonucleotide nucleotidyltransferase (711 aa).

Mg(2+)-binding residues include D486 and D492. The KH domain occupies 553–612 (PRIHTIKINPDKIKDVIGKGGSVIRALTEETGTTIEIEDDGTVKIAATDGEKAKHAIRRI). Residues 622 to 690 (GRVYTGKVTR…RQGRIRLSIK (69 aa)) form the S1 motif domain. Residues 689–711 (IKEATEQSQPAAAPEAPAAEQGE) form a disordered region. The span at 694–711 (EQSQPAAAPEAPAAEQGE) shows a compositional bias: low complexity.

It belongs to the polyribonucleotide nucleotidyltransferase family. In terms of assembly, component of the RNA degradosome, which is a multiprotein complex involved in RNA processing and mRNA degradation. The cofactor is Mg(2+).

It localises to the cytoplasm. The enzyme catalyses RNA(n+1) + phosphate = RNA(n) + a ribonucleoside 5'-diphosphate. Involved in mRNA degradation. Catalyzes the phosphorolysis of single-stranded polyribonucleotides processively in the 3'- to 5'-direction. The polypeptide is Polyribonucleotide nucleotidyltransferase (Shigella boydii serotype 4 (strain Sb227)).